The sequence spans 437 residues: Trigger factor (437 aa).

The region spanning 163-248 is the PPIase FKBP-type domain; sequence GHMVTIDYAF…LNEIKRKELP (86 aa).

Belongs to the FKBP-type PPIase family. Tig subfamily.

It localises to the cytoplasm. It carries out the reaction [protein]-peptidylproline (omega=180) = [protein]-peptidylproline (omega=0). Involved in protein export. Acts as a chaperone by maintaining the newly synthesized protein in an open conformation. Functions as a peptidyl-prolyl cis-trans isomerase. The protein is Trigger factor of Pelobacter propionicus (strain DSM 2379 / NBRC 103807 / OttBd1).